A 409-amino-acid chain; its full sequence is Phosphoserine phosphatase SerB2 (409 aa).

2 ACT domains span residues 8 to 86 (LITV…RSDD) and 102 to 174 (GRPI…DYGL). Residue D185 is the Nucleophile of the active site. 2 residues coordinate Mg(2+): D185 and D187. The active-site Proton donor is the D187. Residues E194, R230, 273–274 (SG), and K318 each bind substrate. D341 is a binding site for Mg(2+). N344 provides a ligand contact to substrate.

Belongs to the HAD-like hydrolase superfamily. SerB family. As to quaternary structure, homodimer. The dimeric population shifts to a tetramer in the presence of L-serine, which inactivates the enzyme. It depends on Mg(2+) as a cofactor. Mn(2+) is required as a cofactor.

Its subcellular location is the secreted. It is found in the host cytoplasm. It localises to the host cytosol. The enzyme catalyses O-phospho-L-serine + H2O = L-serine + phosphate. It catalyses the reaction O-phospho-D-serine + H2O = D-serine + phosphate. The catalysed reaction is O-phospho-L-seryl-[protein] + H2O = L-seryl-[protein] + phosphate. It carries out the reaction O-phospho-L-threonyl-[protein] + H2O = L-threonyl-[protein] + phosphate. The protein operates within amino-acid biosynthesis; L-serine biosynthesis; L-serine from 3-phospho-D-glycerate: step 3/3. Its activity is regulated as follows. Clofazimine, a drug being evaluated for XDR and MDR tuberculosis, inhibits SerB2 phosphatase activity and reverses the various functional effects described above and interactions with host proteins. Is inhibited by known PSP inhibitors such as chlorpromazine, DL-AP3 and sodium orthovanadate, but not by okadaic acid. By binding to the ACT domains, amino-acids have various effects on enzyme activity: L-serine and L-glycine act as inhibitors, whereas L-lysine, L-tyrosine and L-phenylalanine are activators. High throughput screen has been performed to identify specific PSP inhibitors with activity against intracellular bacteria; the two best hits identified in this screen, clorobiocin and rosaniline, are bactericidal and kill bacteria in infected macrophages in a dose-dependent manner. Catalyzes the dephosphorylation of O-phospho-L-serine into L-serine, a step in the L-serine biosynthetic pathway. Exhibits high specificity for L-phosphoserine compared to substrates like L-phosphothreonine (5% relative activity) and L-phosphotyrosine (1.7% relative activity). Functionally, in the host, induces significant cytoskeleton rearrangements through cofilin dephosphorylation and its subsequent activation, and affects the expression of genes that regulate actin dynamics. It specifically interacts with HSP90, HSP70 and HSP27 that block apoptotic pathways but not with other HSPs. Also interacts with GAPDH. It actively dephosphorylates MAP kinase p38 and NF-kappa B p65 (specifically at Ser-536) that play crucial roles in inflammatory and immune responses. This in turn leads to down-regulation of Interleukin 8, a chemotactic and inflammatory cytokine. Thus might help the pathogen to evade the host's immune response. Exogenous addition of purified SerB2 protein to human THP-1 cells (that can be differentiated into macrophage-like cells) induces microtubule rearrangements; the phosphatase activity is co-related to the elicited rearrangements, while addition of the ACT-domains alone elicits no rearrangements. The chain is Phosphoserine phosphatase SerB2 from Mycobacterium tuberculosis (strain ATCC 25618 / H37Rv).